Consider the following 155-residue polypeptide: Small ribosomal subunit protein uS7c (155 aa).

It belongs to the universal ribosomal protein uS7 family. In terms of assembly, part of the 30S ribosomal subunit.

It is found in the plastid. The protein localises to the chloroplast. Its function is as follows. One of the primary rRNA binding proteins, it binds directly to 16S rRNA where it nucleates assembly of the head domain of the 30S subunit. In Dioscorea bulbifera (Air potato), this protein is Small ribosomal subunit protein uS7c (rps7).